We begin with the raw amino-acid sequence, 655 residues long: Endoplasmic reticulum chaperone BiP (655 aa).

Residues 1–19 form the signal peptide; the sequence is MMKFTVVAAALLLLGAVRA. The tract at residues 1–81 is required for interaction with ELAPOR1; it reads MMKFTVVAAA…EGERLIGDAA (81 aa). 37–40 serves as a coordination point for ATP; sequence GTTY. At serine 87 the chain carries Phosphoserine. Residue lysine 97 participates in ATP binding. The residue at position 126 (lysine 126) is an N6-acetyllysine. The nucleotide-binding (NBD) stretch occupies residues 126–281; it reads KPYIQVDIGG…KKKTGKDVRK (156 aa). Tyrosine 161 is modified (3'-nitrotyrosine). Lysine 214 bears the N6-acetyllysine mark. 228 to 230 contacts ATP; that stretch reads GGT. The residue at position 272 (lysine 272) is an N6-acetyllysine. 294 to 301 serves as a coordination point for ATP; the sequence is EKAKRALS. Lysine 327 bears the N6-acetyllysine mark. Lysine 353 is covalently cross-linked (Glycyl lysine isopeptide (Lys-Gly) (interchain with G-Cter in SUMO2)). Lysine 354 bears the N6-acetyllysine; alternate mark. Residue lysine 354 forms a Glycyl lysine isopeptide (Lys-Gly) (interchain with G-Cter in SUMO1); alternate linkage. 365-368 is an ATP binding site; that stretch reads GSTR. Positions 410-420 are interdomain linker; the sequence is QDTGDLVLLDV. The interval 421-501 is substrate-binding (SBD); the sequence is CPLTLGIETV…PRGVPQIEVT (81 aa). Lysine 448 is modified (N6-succinyllysine). At arginine 493 the chain carries Omega-N-methylarginine. At threonine 519 the chain carries O-AMP-threonine; alternate. At threonine 519 the chain carries Phosphothreonine; alternate. N6,N6,N6-trimethyllysine; by METTL21A; in vitro is present on lysine 586. Lysine 586 carries the post-translational modification N6,N6-dimethyllysine; alternate. N6-methyllysine; alternate is present on lysine 586. Residue lysine 592 is modified to N6-methyllysine. The tract at residues 632 to 655 is disordered; that stretch reads ISKLYGSGGPPPTGEEDTSEKDEL. Threonine 644 and threonine 649 each carry phosphothreonine. A compositionally biased stretch (acidic residues) spans 645-655; the sequence is GEEDTSEKDEL. Serine 650 bears the Phosphoserine mark. The short motif at 652–655 is the Prevents secretion from ER element; sequence KDEL.

It belongs to the heat shock protein 70 family. Monomer and homooligomer; homooligomerization via the interdomain linker inactivates the chaperone activity and acts as a storage of HSPA5/BiP molecules. Interacts with DNAJC1 (via J domain). Component of an EIF2 complex at least composed of CELF1/CUGBP1, CALR, CALR3, EIF2S1, EIF2S2, HSP90B1 and HSPA5. Part of a large chaperone multiprotein complex comprising DNAJB11, HSP90B1, HSPA5, HYOU, PDIA2, PDIA4, PDIA6, PPIB, SDF2L1, UGGT1 and very small amounts of ERP29, but not, or at very low levels, CALR nor CANX. Interacts with TMEM132A and TRIM21. May form a complex with ERLEC1, OS9, SEL1L and SYVN1. Interacts with DNAJC10. Interacts with DNAJB9/ERdj4; leading to recruit HSPA5/BiP to ERN1/IRE1. Interacts with ERN1/IRE1 (via luminal domain); the interaction takes place following interaction with DNAJB9/ERdj4 and leads to inactivate ERN1/IRE1, the interaction also competitively inhibits ERN1 interaction with MANF. Interacts directly with MANF (via SAP domain); the interaction inhibits ATP binding to HSPA5/BiP and subsequent nucleotide exchange. Interacts with ERN1 (via luminal domain); the interaction competitively inhibits ERN1 interaction with MANF. Interacts with EIF2AK3/PERK (via luminal domain); interaction leads to inactivate EIF2AK3/PERK. Interacts with MX1. Interacts with METTL23. Interacts with CEMIP; the interaction induces calcium leakage from the endoplasmic reticulum and cell migration. Interacts with PCSK4 form; the interaction takes place in the endoplasmic reticulum. Interacts with CIPC. Interacts with CCDC88B (via C-terminus); the interaction opposes ERN1-mediated JNK activation, protecting against apoptosis. Interacts with INPP5K; necessary for INPP5K localization at the endoplasmic reticulum. Interacts with MANF; the interaction is direct. Interacts with LOXL2; leading to activate the ERN1/IRE1-XBP1 pathway of the unfolded protein response. Interacts with CLU under stressed condition; interaction increases CLU protein stability; facilitates its retrotranslocation and redistribution to the mitochondria; cooperatively suppress stress-induced apoptosis by stabilizing mitochondrial membrane integrity. Interacts with CCDC47. Interacts with CLN3. Interacts with ELAPOR1; may regulate the function of HSPA5 in apoptosis and cell proliferation. Interacts with CASP7. Interacts with ILDR2; the interaction stabilizes ILDR2 expression. Interacts with ADAM7. Post-translationally, in unstressed cells, AMPylation at Thr-519 by FICD inactivates the chaperome activity: AMPylated form is locked in a relatively inert state and only weakly stimulated by J domain-containing proteins. In response to endoplasmic reticulum stress, de-AMPylation by the same protein, FICD, restores the chaperone activity. Expressed in sperm (at protein level).

It localises to the endoplasmic reticulum lumen. Its subcellular location is the melanosome. The protein localises to the cytoplasm. The protein resides in the cell surface. It catalyses the reaction ATP + H2O = ADP + phosphate + H(+). Its activity is regulated as follows. The chaperone activity is regulated by ATP-induced allosteric coupling of the nucleotide-binding (NBD) and substrate-binding (SBD) domains. In the ADP-bound and nucleotide-free (apo) states, the two domains have little interaction. In contrast, in the ATP-bound state the two domains are tightly coupled, which results in drastically accelerated kinetics in both binding and release of polypeptide substrates. J domain-containing co-chaperones (DNAJB9/ERdj4 or DNAJC10/ERdj5) stimulate the ATPase activity and are required for efficient substrate recognition by HSPA5/BiP. Homooligomerization inactivates participating HSPA5/BiP protomers and probably act as reservoirs to store HSPA5/BiP molecules when they are not needed by the cell. Endoplasmic reticulum chaperone that plays a key role in protein folding and quality control in the endoplasmic reticulum lumen. Involved in the correct folding of proteins and degradation of misfolded proteins via its interaction with DNAJC10/ERdj5, probably to facilitate the release of DNAJC10/ERdj5 from its substrate. Acts as a key repressor of the EIF2AK3/PERK and ERN1/IRE1-mediated unfolded protein response (UPR). In the unstressed endoplasmic reticulum, recruited by DNAJB9/ERdj4 to the luminal region of ERN1/IRE1, leading to disrupt the dimerization of ERN1/IRE1, thereby inactivating ERN1/IRE1. Also binds and inactivates EIF2AK3/PERK in unstressed cells. Accumulation of misfolded protein in the endoplasmic reticulum causes release of HSPA5/BiP from ERN1/IRE1 and EIF2AK3/PERK, allowing their homodimerization and subsequent activation. Plays an auxiliary role in post-translational transport of small presecretory proteins across endoplasmic reticulum (ER). May function as an allosteric modulator for SEC61 channel-forming translocon complex, likely cooperating with SEC62 to enable the productive insertion of these precursors into SEC61 channel. Appears to specifically regulate translocation of precursors having inhibitory residues in their mature region that weaken channel gating. May also play a role in apoptosis and cell proliferation. The chain is Endoplasmic reticulum chaperone BiP from Mus musculus (Mouse).